Here is a 212-residue protein sequence, read N- to C-terminus: Large ribosomal subunit protein uL3 (212 aa).

Gln-152 carries the N5-methylglutamine modification.

The protein belongs to the universal ribosomal protein uL3 family. Part of the 50S ribosomal subunit. Forms a cluster with proteins L14 and L19. Post-translationally, methylated by PrmB.

In terms of biological role, one of the primary rRNA binding proteins, it binds directly near the 3'-end of the 23S rRNA, where it nucleates assembly of the 50S subunit. This is Large ribosomal subunit protein uL3 from Chromohalobacter salexigens (strain ATCC BAA-138 / DSM 3043 / CIP 106854 / NCIMB 13768 / 1H11).